The primary structure comprises 154 residues: 6,7-dimethyl-8-ribityllumazine synthase (154 aa).

Residues Phe22, 56-58 (AFE), and 80-82 (AVI) contribute to the 5-amino-6-(D-ribitylamino)uracil site. 85 to 86 (AT) contacts (2S)-2-hydroxy-3-oxobutyl phosphate. Residue His88 is the Proton donor of the active site. Position 113 (Phe113) interacts with 5-amino-6-(D-ribitylamino)uracil. Arg127 contacts (2S)-2-hydroxy-3-oxobutyl phosphate.

It belongs to the DMRL synthase family.

It carries out the reaction (2S)-2-hydroxy-3-oxobutyl phosphate + 5-amino-6-(D-ribitylamino)uracil = 6,7-dimethyl-8-(1-D-ribityl)lumazine + phosphate + 2 H2O + H(+). It participates in cofactor biosynthesis; riboflavin biosynthesis; riboflavin from 2-hydroxy-3-oxobutyl phosphate and 5-amino-6-(D-ribitylamino)uracil: step 1/2. In terms of biological role, catalyzes the formation of 6,7-dimethyl-8-ribityllumazine by condensation of 5-amino-6-(D-ribitylamino)uracil with 3,4-dihydroxy-2-butanone 4-phosphate. This is the penultimate step in the biosynthesis of riboflavin. The chain is 6,7-dimethyl-8-ribityllumazine synthase from Clostridium botulinum (strain Okra / Type B1).